We begin with the raw amino-acid sequence, 546 residues long: Cytokine-like nuclear factor N-PAC (546 aa).

In terms of domain architecture, PWWP spans 8–66 (LGDLVWGKLGRYPPWPGKIVNPPKDLKKPRGKKCFFVKFFGTEDHAWIKVEQLKPYHAH). Basic and acidic residues-rich tracts occupy residues 91-145 (RRAK…EGKK) and 161-181 (RAQE…KDLT). The interval 91-187 (RRAKGKDQTS…KDLTIPESST (97 aa)) is disordered. Position 130 is a phosphoserine (Ser130). Lys135 participates in a covalent cross-link: Glycyl lysine isopeptide (Lys-Gly) (interchain with G-Cter in SUMO2). Ser166 bears the Phosphoserine mark. Positions 167 to 179 (PRKRGRPPKDEKD) form a DNA-binding region, a.T hook. Glycyl lysine isopeptide (Lys-Gly) (interchain with G-Cter in SUMO2) cross-links involve residues Lys175, Lys178, Lys200, and Lys210. Residues 213 to 216 (DPHF) are interaction with histone H3. The interval 215–224 (HFHHFLLSQT) is interaction with KDM1B. Glycyl lysine isopeptide (Lys-Gly) (interchain with G-Cter in SUMO2) cross-links involve residues Lys226, Lys236, Lys239, and Lys268. Positions 260–546 (GSITPTDKKI…MSAVYRAYIH (287 aa)) are dehydrogenase domain. 270-284 (GFLGLGLMGSGIVSN) contributes to the NAD(+) binding site. Residue Lys301 forms a Glycyl lysine isopeptide (Lys-Gly) (interchain with G-Cter in SUMO2) linkage. Positions 355 and 498 each coordinate NAD(+). Residue Ser533 is modified to Phosphoserine.

This sequence belongs to the HIBADH-related family. NP60 subfamily. As to quaternary structure, homotetramere. Interacts with MAPK14. Interacts with KDM1B at nucleosomes; this interaction stimulates H3K4me1 and H3K4me2 demethylation. Binds to mononucleosomes. Interacts with GATA4; the interaction is required for a synergistic activation of GATA4 target genes transcription.

It is found in the nucleus. It localises to the chromosome. Functionally, cytokine-like nuclear factor with chromatin gene reader activity involved in chromatin modification and regulation of gene expression. Acts as a nucleosome-destabilizing factor that is recruited to genes during transcriptional activation. Recognizes and binds histone H3 without a preference for specific epigenetic markers and also binds DNA. Interacts with KDM1B and promotes its histone demethylase activity by facilitating the capture of H3 tails, they form a multifunctional enzyme complex that modifies transcribed chromatin and facilitates Pol II transcription through nucleosomes. Stimulates the acetylation of 'Lys-56' of nucleosomal histone H3 (H3K56ac) by EP300. With GATA4, co-binds a defined set of heart development genes and coregulates their expression during cardiomyocyte differentiation. Regulates p38 MAP kinase activity by mediating stress activation of MAPK14/p38alpha and specifically regulating MAPK14 signaling. Indirectly promotes phosphorylation of MAPK14 and activation of ATF2. The phosphorylation of MAPK14 requires upstream activity of MAP2K4 and MAP2K6. This chain is Cytokine-like nuclear factor N-PAC, found in Mus musculus (Mouse).